The following is a 56-amino-acid chain: Pituitary adenylate cyclase-activating polypeptide (56 aa).

The interval 42–50 is important for receptor binding; sequence VKKYLAAVL. L50 is subject to Leucine amide.

The protein belongs to the glucagon family. Interacts with ADCYAP1R1 (via N-terminal extracellular domain).

The protein localises to the secreted. Its function is as follows. PACAP is a neuropeptide involved in diverse array of physiological processes through activating the PACAP subfamily of class B1 G protein-coupled receptors: VIP receptor 1 (VIPR1), VIP receptor 2 (VIPR2), and PACAP type I receptor (ADCYAP1R1). Exerts neuroprotective and general cytoprotective effects due to anti-apoptotic, anti-inflammatory, and antioxidant actions. The chain is Pituitary adenylate cyclase-activating polypeptide (Adcyap1) from Heloderma suspectum (Gila monster).